Here is a 496-residue protein sequence, read N- to C-terminus: Fibronectin type III and SPRY domain-containing protein 1 (496 aa).

The stretch at 4–99 forms a coiled coil; it reads QREALRKIIK…ALESSEELLE (96 aa). The region spanning 105 to 162 is the COS domain; the sequence is LQAMDSEDFPQAAKQIKDGVTMAPAFRLSLKAKVSDNMSHLMVDFAQERQMLQALKFL. Positions 164–268 constitute a Fibronectin type-III domain; the sequence is VPSAPVIDLA…EPVTLETPAF (105 aa). Residues 268–477 form the B30.2/SPRY domain; that stretch reads FMFRLDASTS…VTTGLQVPSA (210 aa). Residues 301–336 form a disordered region; that stretch reads KAREKDGKGRTASPINSPARGTPSPKRMPSGRGGRD. Omega-N-methylarginine occurs at positions 310 and 320.

Oligomerization is required for binding to microtubules. As to expression, highly expressed in brain tissues, including cerebellum, cerebral cortex, medulla, occipital pole, frontal lobe, temporal lobe and putamen. Lower expression in spinal cord.

It localises to the cytoplasm. It is found in the cytoskeleton. The protein localises to the microtubule organizing center. The protein resides in the centrosome. Its subcellular location is the nucleus. It localises to the cleavage furrow. Its function is as follows. May be involved in microtubule organization and stabilization. The protein is Fibronectin type III and SPRY domain-containing protein 1 (FSD1) of Homo sapiens (Human).